The sequence spans 420 residues: DNA primase small subunit (420 aa).

Met1 carries the post-translational modification N-acetylmethionine. Catalysis depends on residues Glu44, Asp109, and Asp111. Mg(2+)-binding residues include Asp109 and Asp111. Positions 109 and 111 each coordinate Mn(2+). 109 to 111 (DID) contacts a ribonucleoside 5'-triphosphate. The Zn(2+) site is built by Cys121, Cys122, Cys128, and Cys131. The Zinc knuckle motif signature appears at 121-131 (CCSSADICPKC). 160-166 (SGRRGVH) serves as a coordination point for a ribonucleoside 5'-triphosphate. Asp306 is a Mg(2+) binding site. Asp306 lines the Mn(2+) pocket. Residues 315 to 318 (HLLK) and His324 each bind a ribonucleoside 5'-triphosphate. Residues 363 to 373 (NEEEKEENEAE) are compositionally biased toward acidic residues. Residues 363–382 (NEEEKEENEAESDVKHRTRD) are disordered.

It belongs to the eukaryotic-type primase small subunit family. In terms of assembly, heterodimer of a catalytic subunit PRIM1 and a regulatory subunit PRIM2, also known as the DNA primase complex. Interacts with PRIM2 (via C-terminus). Component of the alpha DNA polymerase complex (also known as the alpha DNA polymerase-primase complex) consisting of four subunits: the catalytic subunit POLA1, the regulatory subunit POLA2, and the primase complex subunits PRIM1 and PRIM2 respectively. Within the complex, POLA1 directly interacts with PRIM2. Mg(2+) is required as a cofactor. Requires Mn(2+) as cofactor.

It carries out the reaction ssDNA + n NTP = ssDNA/pppN(pN)n-1 hybrid + (n-1) diphosphate.. Its activity is regulated as follows. The presence of the regulatory subunit PRIM2/p58 accelerates the kinetics of initiation and primer extension. Inhibited by arabinose nucleoside derivatives such as fludarabine and vidarabine. In terms of biological role, catalytic subunit of the DNA primase complex and component of the DNA polymerase alpha complex (also known as the alpha DNA polymerase-primase complex - primosome/replisome) which play an essential role in the initiation of DNA synthesis. During the S phase of the cell cycle, the DNA polymerase alpha complex (composed of a catalytic subunit POLA1, an accessory subunit POLA2 and two primase subunits, the catalytic subunit PRIM1 and the regulatory subunit PRIM2) is recruited to DNA at the replicative forks via direct interactions with MCM10 and WDHD1. The primase subunit of the polymerase alpha complex initiates DNA synthesis by oligomerising short RNA primers on both leading and lagging strands. These primers are initially extended by the polymerase alpha catalytic subunit and subsequently transferred to polymerase delta and polymerase epsilon for processive synthesis on the lagging and leading strand, respectively. In the primase complex, both subunits are necessary for the initial di-nucleotide formation, but the extension of the primer depends only on the catalytic subunit. Synthesizes 9-mer RNA primers (also known as the 'unit length' RNA primers). Incorporates only ribonucleotides in the presence of ribo- and deoxy-nucleotide triphosphates (rNTPs, dNTPs). Requires template thymine or cytidine to start the RNA primer synthesis, with an adenine or guanine at its 5'-end. Binds single stranded DNA. The sequence is that of DNA primase small subunit (PRIM1) from Homo sapiens (Human).